A 101-amino-acid chain; its full sequence is Putative pterin-4-alpha-carbinolamine dehydratase (101 aa).

This sequence belongs to the pterin-4-alpha-carbinolamine dehydratase family.

The catalysed reaction is (4aS,6R)-4a-hydroxy-L-erythro-5,6,7,8-tetrahydrobiopterin = (6R)-L-erythro-6,7-dihydrobiopterin + H2O. The chain is Putative pterin-4-alpha-carbinolamine dehydratase (phhB) from Ralstonia nicotianae (strain ATCC BAA-1114 / GMI1000) (Ralstonia solanacearum).